The chain runs to 298 residues: Glyoxalase domain-containing protein 4 (298 aa).

One can recognise a VOC 1 domain in the interval 5–130 (RALHFVFKVG…GGYKFYLQDR (126 aa)). At lysine 109 the chain carries N6-succinyllysine. Residue serine 131 is modified to Phosphoserine. Residues 137-258 (PVLKVTLAVS…DGHEICFVGD (122 aa)) enclose the VOC 2 domain. Lysine 273 is modified (N6-succinyllysine).

Belongs to the glyoxalase I family. As to quaternary structure, interacts with NUDT9.

The protein localises to the mitochondrion. The protein is Glyoxalase domain-containing protein 4 (Glod4) of Rattus norvegicus (Rat).